The following is a 235-amino-acid chain: Nitrile hydratase subunit beta (235 aa).

Belongs to the nitrile hydratase subunit beta family. In terms of assembly, heterodimer of an alpha and a beta chain.

The catalysed reaction is an aliphatic primary amide = an aliphatic nitrile + H2O. Its function is as follows. NHase catalyzes the hydration of various nitrile compounds to the corresponding amides. In Rhodococcus sp, this protein is Nitrile hydratase subunit beta (nthB).